The following is a 133-amino-acid chain: UPF0102 protein Anae109_1947 (133 aa).

This sequence belongs to the UPF0102 family.

The protein is UPF0102 protein Anae109_1947 of Anaeromyxobacter sp. (strain Fw109-5).